The chain runs to 751 residues: Lanosterol synthase erg7A (751 aa).

The tract at residues 1–22 (MTGGPIASWRTAAQGHLTPDEN) is disordered. The PFTB 1 repeat unit spans residues 147–189 (ATEIKRYLFARQHPEDGGWGLHIEAHSSVFGTCMNYVALRLIG). The Proton donor role is filled by Asp481. PFTB repeat units follow at residues 508-553 (LKDS…MIGY), 585-625 (KDKA…ASVG), and 634-675 (ARRG…VQTA).

The protein belongs to the terpene cyclase/mutase family.

It is found in the lipid droplet. It localises to the endoplasmic reticulum membrane. It carries out the reaction (S)-2,3-epoxysqualene = lanosterol. The protein operates within steroid metabolism; ergosterol biosynthesis. Functionally, lanosterol synthase; part of the third module of ergosterol biosynthesis pathway that includes the late steps of the pathway. ERG7A and ERG7B catalyze the cyclization of (S)-2,3 oxidosqualene to lanosterol, a reaction that forms the sterol core. The third module or late pathway involves the ergosterol synthesis itself through consecutive reactions that mainly occur in the endoplasmic reticulum (ER) membrane. Firstly, the squalene synthase erg9 catalyzes the condensation of 2 farnesyl pyrophosphate moieties to form squalene, which is the precursor of all steroids. Squalene synthase is crucial for balancing the incorporation of farnesyl diphosphate (FPP) into sterol and nonsterol isoprene synthesis. Secondly, squalene is converted into lanosterol by the consecutive action of the squalene epoxidase erg1 and the lanosterol synthase erg7. Then, the delta(24)-sterol C-methyltransferase erg6 methylates lanosterol at C-24 to produce eburicol. Eburicol is the substrate of the sterol 14-alpha demethylase encoded by cyp51A and cyp51B, to yield 4,4,24-trimethyl ergosta-8,14,24(28)-trienol. The C-14 reductase erg24 then reduces the C14=C15 double bond which leads to 4,4-dimethylfecosterol. A sequence of further demethylations at C-4, involving the C-4 demethylation complex containing the C-4 methylsterol oxidases erg25A or erg25B, the sterol-4-alpha-carboxylate 3-dehydrogenase erg26 and the 3-keto-steroid reductase erg27, leads to the production of fecosterol via 4-methylfecosterol. The C-8 sterol isomerase erg2 then catalyzes the reaction which results in unsaturation at C-7 in the B ring of sterols and thus converts fecosterol to episterol. The sterol-C5-desaturase erg3B then catalyzes the introduction of a C-5 double bond in the B ring to produce 5-dehydroepisterol. The 2 other sterol-C5-desaturases, erg3A and erg3C, seem to be less important in ergosterol biosynthesis. The C-22 sterol desaturase erg5 further converts 5-dehydroepisterol into ergosta-5,7,22,24(28)-tetraen-3beta-ol by forming the C-22(23) double bond in the sterol side chain. Finally, ergosta-5,7,22,24(28)-tetraen-3beta-ol is substrate of the C-24(28) sterol reductases erg4A and erg4B to produce ergosterol. Possible alternative sterol biosynthetic pathways might exist from fecosterol to ergosterol, depending on the activities of the erg3 isoforms. The chain is Lanosterol synthase erg7A from Aspergillus fumigatus (strain ATCC MYA-4609 / CBS 101355 / FGSC A1100 / Af293) (Neosartorya fumigata).